We begin with the raw amino-acid sequence, 315 residues long: Ribose-phosphate pyrophosphokinase (315 aa).

ATP contacts are provided by residues 40–42 (DGE) and 99–100 (RQ). Residues His-133 and Asp-175 each coordinate Mg(2+). The active site involves Lys-198. D-ribose 5-phosphate contacts are provided by residues Arg-200, Asp-224, and 228 to 232 (DTAHS).

The protein belongs to the ribose-phosphate pyrophosphokinase family. Class I subfamily. Homohexamer. It depends on Mg(2+) as a cofactor.

The protein resides in the cytoplasm. The enzyme catalyses D-ribose 5-phosphate + ATP = 5-phospho-alpha-D-ribose 1-diphosphate + AMP + H(+). It functions in the pathway metabolic intermediate biosynthesis; 5-phospho-alpha-D-ribose 1-diphosphate biosynthesis; 5-phospho-alpha-D-ribose 1-diphosphate from D-ribose 5-phosphate (route I): step 1/1. Its function is as follows. Involved in the biosynthesis of the central metabolite phospho-alpha-D-ribosyl-1-pyrophosphate (PRPP) via the transfer of pyrophosphoryl group from ATP to 1-hydroxyl of ribose-5-phosphate (Rib-5-P). In Thermotoga maritima (strain ATCC 43589 / DSM 3109 / JCM 10099 / NBRC 100826 / MSB8), this protein is Ribose-phosphate pyrophosphokinase.